A 30-amino-acid polypeptide reads, in one-letter code: Cyclotide cter-G (30 aa).

A cross-link (cyclopeptide (Gly-Asn)) is located at residues 1–30 (GLPCGESCVFIPCITTVVGCSCKNKVCYNN). Cystine bridges form between cysteine 4-cysteine 20, cysteine 8-cysteine 22, and cysteine 13-cysteine 27.

In terms of processing, contains 3 disulfide bonds. This is a cyclic peptide.

In terms of biological role, probably participates in a plant defense mechanism. This chain is Cyclotide cter-G, found in Clitoria ternatea (Butterfly pea).